The following is a 157-amino-acid chain: MALELTEHQLNKLRDFLDEILLDVSQKYQKKFHPGGYQKLEELAFDLEPYFQVVSSIPLEKHTFLVTNFTLRGIDFFVDTIVGFPASPETTFKVFSLLDSLCLRLIQSGNLSTTDTIRLKSLMENCRMVVISKLSDVQGYEMDCASIFEKSLNSIDF.

This is an uncharacterized protein from Schizosaccharomyces pombe (strain 972 / ATCC 24843) (Fission yeast).